We begin with the raw amino-acid sequence, 624 residues long: Basal cell adhesion molecule (624 aa).

An N-terminal signal peptide occupies residues 1–25; the sequence is MEPPDARAGLLWLTLLLSGYSGAQA. Ig-like V-type domains follow at residues 26-136 and 141-251; these read ELHV…SSVR and PEAT…HTFR. Topologically, residues 26-543 are extracellular; that stretch reads ELHVSVPPRV…GSVAPQTAQA (518 aa). 3 disulfide bridges follow: cysteine 47–cysteine 119, cysteine 166–cysteine 231, and cysteine 285–cysteine 331. Ig-like C2-type domains follow at residues 268–343, 357–436, and 443–534; these read PSTT…EEVQ, PLEL…QSFQ, and PELK…FHFG. N-linked (GlcNAc...) asparagine glycosylation is found at asparagine 315, asparagine 371, and asparagine 378. Intrachain disulfides connect cysteine 379/cysteine 419 and cysteine 468/cysteine 518. The segment at 477 to 497 is disordered; it reads KLTWSQRGDTTPAEPPFEGRG. A helical membrane pass occupies residues 544–564; it reads GVAVMAVAVSVGLLLLVVAAF. At 565-624 the chain is on the cytoplasmic side; sequence YCMRRKGRPGCCQRAEKGAPPAREPELSHSGSERPEHTGLLMGGPSGGGRGGNGGFGDEC. Residues 574–624 form a disordered region; that stretch reads GCCQRAEKGAPPAREPELSHSGSERPEHTGLLMGGPSGGGRGGNGGFGDEC. Positions 587 to 601 are enriched in basic and acidic residues; the sequence is REPELSHSGSERPEH. Serine 592, serine 594, and serine 596 each carry phosphoserine. The span at 605–624 shows a compositional bias: gly residues; that stretch reads LMGGPSGGGRGGNGGFGDEC.

In terms of assembly, homodimer. Interacts with ITGA4:ITGB1. Interacts with spectrins SPTA1 and SPTB1.

It localises to the cell membrane. Functionally, transmembrane glycoprotein that functions as both a receptor and an adhesion molecule playing a crucial role in cell adhesion, motility, migration and invasion. Extracellular domain enables binding to extracellular matrix proteins, such as laminin, integrin and other ligands while its intracellular domain interacts with cytoskeletal proteins like hemoglobin, facilitating cell signal transduction. Serves as a receptor for laminin alpha-5/LAMA5 to promote cell adhesion. Mechanistically, JAK2 induces BCAM phosphorylation and activates its adhesion to laminin by stimulating a Rap1/AKT signaling pathway in the absence of EPOR. The chain is Basal cell adhesion molecule (Bcam) from Rattus norvegicus (Rat).